Consider the following 925-residue polypeptide: Eukaryotic translation initiation factor 3 subunit A (925 aa).

Positions 108 to 127 (QAQTDAKEESNKDQAEEDLE) are disordered. The segment covering 112-121 (DAKEESNKDQ) has biased composition (basic and acidic residues). Positions 324–498 (FKFYSSQFVL…DTVSFAQDPF (175 aa)) constitute a PCI domain. Disordered stretches follow at residues 509-544 (PESS…FTRN) and 839-925 (KEAL…AGRG). 2 coiled-coil regions span residues 534 to 666 (EEQN…MKKL) and 785 to 885 (SVIA…SSRS). The span at 839–880 (KEALAKEEELAKRRAERERINKERDEIARKQREIEELLEKKN) shows a compositional bias: basic and acidic residues. Residues 916 to 925 (RLKRMNAGRG) are compositionally biased toward basic residues.

The protein belongs to the eIF-3 subunit A family. As to quaternary structure, component of the eukaryotic translation initiation factor 3 (eIF-3) complex.

It localises to the cytoplasm. RNA-binding component of the eukaryotic translation initiation factor 3 (eIF-3) complex, which is involved in protein synthesis of a specialized repertoire of mRNAs and, together with other initiation factors, stimulates binding of mRNA and methionyl-tRNAi to the 40S ribosome. The eIF-3 complex specifically targets and initiates translation of a subset of mRNAs involved in cell proliferation. The sequence is that of Eukaryotic translation initiation factor 3 subunit A from Kluyveromyces lactis (strain ATCC 8585 / CBS 2359 / DSM 70799 / NBRC 1267 / NRRL Y-1140 / WM37) (Yeast).